The sequence spans 91 residues: Large ribosomal subunit protein eL34 (91 aa).

The segment at 48-69 (RGRPVEMRKLPKTKKRPERPMP) is disordered.

This sequence belongs to the eukaryotic ribosomal protein eL34 family.

This is Large ribosomal subunit protein eL34 (rpl34e) from Pyrococcus horikoshii (strain ATCC 700860 / DSM 12428 / JCM 9974 / NBRC 100139 / OT-3).